A 207-amino-acid polypeptide reads, in one-letter code: Ras-related protein Rab-7a (207 aa).

N-acetylthreonine is present on Thr-2. Residues Ser-17, Gly-18, Val-19, Gly-20, Lys-21, Thr-22, Ser-23, Ser-34, Asn-35, Tyr-37, and Thr-40 each coordinate GTP. A Mg(2+)-binding site is contributed by Thr-22. The short motif at 28-41 is the Switch 1 element; the sequence is YVNKKFSNQYKATI. Mg(2+) is bound by residues Thr-40 and Asp-63. A GTP-binding site is contributed by Gly-66. A Switch 2 motif is present at residues 67–82; that stretch reads QERFQSLGVAFYRGAD. Position 72 is a phosphoserine (Ser-72). Asn-125, Lys-126, Asp-128, Ala-156, and Lys-157 together coordinate GTP. Residues Lys-191 and Lys-194 each participate in a glycyl lysine isopeptide (Lys-Gly) (interchain with G-Cter in ubiquitin) cross-link. Residues Cys-205 and Cys-207 are each lipidated (S-geranylgeranyl cysteine). Cys-207 bears the Cysteine methyl ester mark.

The protein belongs to the small GTPase superfamily. Rab family. As to quaternary structure, interacts with NTRK1/TRKA, RILP, PSMA7, RNF115 and FYCO1. Interacts with the PIK3C3/VPS34-PIK3R4 complex. The GTP-bound form interacts with OSBPL1A and RAC1. Interacts with CLN3. Interacts with CHM, the substrate-binding subunit of the Rab geranylgeranyltransferase complex. Interacts with C9orf72. Does not interact with HPS4 and the BLOC-3 complex (heterodimer of HPS1 and HPS4). Interacts with CLN5. Interacts with PLEKHM1 (via N- and C-terminus). Interacts with PRPH; the interaction is direct. Interacts with VPS13A. The GDP-bound form interacts with RIMOC1. Interacts with the MON1A-CCZ1B complex and this interaction is enhanced in the presence of RIMOC1. Interacts with VPS39 and VPS41. Forms a ternary complex with LAMP2 and RUFY4; the interaction with LAMP2 is mediated by RUFY4 (via RUN and coiled coil domains). Mg(2+) serves as cofactor. In terms of processing, deubiquitination at Lys-191 and Lys-194 by USP32. Phosphorylated at Ser-72 by LRRK1; phosphorylation is dependent on protein kinase C (PKC) activation of LRRK1. Post-translationally, prenylated. Prenylation is required for association with cellular membranes. Widely expressed. High expression in liver, heart and kidney. Found in sensory and motor neurons.

The protein localises to the cytoplasmic vesicle. The protein resides in the phagosome membrane. Its subcellular location is the late endosome membrane. It localises to the lysosome membrane. It is found in the melanosome membrane. The protein localises to the autophagosome membrane. The protein resides in the lipid droplet. Its subcellular location is the endosome membrane. It localises to the mitochondrion membrane. The enzyme catalyses GTP + H2O = GDP + phosphate + H(+). Its activity is regulated as follows. Regulated by guanine nucleotide exchange factors (GEFs) which promote the exchange of bound GDP for free GTP. Regulated by GTPase activating proteins (GAPs) which increase the GTP hydrolysis activity. Inhibited by GDP dissociation inhibitors (GDIs). Its function is as follows. The small GTPases Rab are key regulators of intracellular membrane trafficking, from the formation of transport vesicles to their fusion with membranes. Rabs cycle between an inactive GDP-bound form and an active GTP-bound form that is able to recruit to membranes different sets of downstream effectors directly responsible for vesicle formation, movement, tethering and fusion. In its active state, RAB7A binds to a variety of effector proteins playing a key role in the regulation of endo-lysosomal trafficking. Governs early-to-late endosomal maturation, microtubule minus-end as well as plus-end directed endosomal migration and positioning, and endosome-lysosome transport through different protein-protein interaction cascades. Also plays a central role in growth-factor-mediated cell signaling, nutrient-transporter-mediated nutrient uptake, neurotrophin transport in the axons of neurons and lipid metabolism. Also involved in regulation of some specialized endosomal membrane trafficking, such as maturation of melanosomes, pathogen-induced phagosomes (or vacuoles) and autophagosomes. Plays a role in the maturation and acidification of phagosomes that engulf pathogens, such as S.aureus and Mycobacteria. Plays a role in the fusion of phagosomes with lysosomes. In concert with RAC1, plays a role in regulating the formation of RBs (ruffled borders) in osteoclasts. Controls the endosomal trafficking and neurite outgrowth signaling of NTRK1/TRKA. Regulates the endocytic trafficking of the EGF-EGFR complex by regulating its lysosomal degradation. Involved in the ADRB2-stimulated lipolysis through lipophagy, a cytosolic lipase-independent autophagic pathway. Required for the exosomal release of SDCBP, CD63 and syndecan. Required for vesicular trafficking and cell surface expression of ACE2. May play a role in PRPH neuronal intermediate filament assembly. The polypeptide is Ras-related protein Rab-7a (Mus musculus (Mouse)).